The following is a 434-amino-acid chain: UDP-glucose 6-dehydrogenase (434 aa).

Residues 2 to 19 (NITFIGSGYVGLVSGIIM), Val-11, Asp-30, Lys-35, Thr-121, and Glu-152 each bind NAD(+). Substrate contacts are provided by residues 148–152 (EFLRE), Lys-204, Asn-208, 249–253 (FLNAG), and Gly-257. The active-site Nucleophile is the Cys-260. Residue Lys-263 participates in NAD(+) binding. Substrate is bound at residue Lys-321. Arg-328 serves as a coordination point for NAD(+).

This sequence belongs to the UDP-glucose/GDP-mannose dehydrogenase family.

The catalysed reaction is UDP-alpha-D-glucose + 2 NAD(+) + H2O = UDP-alpha-D-glucuronate + 2 NADH + 3 H(+). It functions in the pathway nucleotide-sugar biosynthesis; UDP-alpha-D-glucuronate biosynthesis; UDP-alpha-D-glucuronate from UDP-alpha-D-glucose: step 1/1. The sequence is that of UDP-glucose 6-dehydrogenase (udg) from Rickettsia typhi (strain ATCC VR-144 / Wilmington).